The sequence spans 130 residues: Small ribosomal subunit protein uS11 (130 aa).

It belongs to the universal ribosomal protein uS11 family. As to quaternary structure, part of the 30S ribosomal subunit. Interacts with proteins S7 and S18. Binds to IF-3.

Its function is as follows. Located on the platform of the 30S subunit, it bridges several disparate RNA helices of the 16S rRNA. Forms part of the Shine-Dalgarno cleft in the 70S ribosome. This chain is Small ribosomal subunit protein uS11, found in Prochlorococcus marinus (strain NATL2A).